A 416-amino-acid polypeptide reads, in one-letter code: D-amino acid dehydrogenase (416 aa).

Residue Val3–Tyr17 coordinates FAD.

It belongs to the DadA oxidoreductase family. FAD is required as a cofactor.

The catalysed reaction is a D-alpha-amino acid + A + H2O = a 2-oxocarboxylate + AH2 + NH4(+). It functions in the pathway amino-acid degradation; D-alanine degradation; NH(3) and pyruvate from D-alanine: step 1/1. Oxidative deamination of D-amino acids. This chain is D-amino acid dehydrogenase, found in Rhizobium rhizogenes (strain K84 / ATCC BAA-868) (Agrobacterium radiobacter).